Here is a 923-residue protein sequence, read N- to C-terminus: Periodic tryptophan protein 2 (923 aa).

WD repeat units follow at residues 12-52 (GTVY…TFEY), 53-93 (EHRK…LHHF), 94-132 (NFKE…KDRQ), 144-183 (GHFQ…KNLA), and 189-228 (GHRD…SDDD). Phosphoserine is present on residues Ser-225 and Ser-232. WD repeat units lie at residues 258–297 (ANQA…LIQQ), 300–340 (MGQN…YILK), 343–382 (GHFD…CLAT), 385–424 (EHTS…NFRT), 428–470 (TERI…DALS), 471–510 (GHEG…QQVE), 513–552 (EVYS…QVGN), and 575–614 (ERSK…LLKR). 2 positions are modified to phosphoserine: Ser-651 and Ser-664. Residues 653–674 (LEDRIDNSLPGSQRGGDLSTRK) form a disordered region. A WD 14 repeat occupies 676-714 (RPEVRVTSVQFSPTANAFAAASTEGLLIYSTNDTILFDP). 2 stretches are compositionally biased toward acidic residues: residues 869-893 (KDDA…DEEG) and 911-923 (DSSD…KELP). Residues 869–923 (KDDADEDNEENEENDVVMESDDEEGWIGFNGKDNKLPLSNENDSSDEEENEKELP) form a disordered region. Ser-912 and Ser-913 each carry phosphoserine.

Belongs to the WD repeat PWP2 family. In terms of assembly, interacts with snoRNA U3. Interacts with MPP10. Component of the ribosomal small subunit (SSU) processome composed of at least 40 protein subunits and snoRNA U3.

It localises to the nucleus. The protein localises to the nucleolus. Required for bud-site selection and cell separation. Also involved in nucleolar processing of pre-18S ribosomal RNA. The polypeptide is Periodic tryptophan protein 2 (PWP2) (Saccharomyces cerevisiae (strain ATCC 204508 / S288c) (Baker's yeast)).